We begin with the raw amino-acid sequence, 253 residues long: Imidazole glycerol phosphate synthase subunit HisF (253 aa).

Catalysis depends on residues Asp11 and Asp130.

Belongs to the HisA/HisF family. As to quaternary structure, heterodimer of HisH and HisF.

Its subcellular location is the cytoplasm. It carries out the reaction 5-[(5-phospho-1-deoxy-D-ribulos-1-ylimino)methylamino]-1-(5-phospho-beta-D-ribosyl)imidazole-4-carboxamide + L-glutamine = D-erythro-1-(imidazol-4-yl)glycerol 3-phosphate + 5-amino-1-(5-phospho-beta-D-ribosyl)imidazole-4-carboxamide + L-glutamate + H(+). Its pathway is amino-acid biosynthesis; L-histidine biosynthesis; L-histidine from 5-phospho-alpha-D-ribose 1-diphosphate: step 5/9. Functionally, IGPS catalyzes the conversion of PRFAR and glutamine to IGP, AICAR and glutamate. The HisF subunit catalyzes the cyclization activity that produces IGP and AICAR from PRFAR using the ammonia provided by the HisH subunit. This Methylibium petroleiphilum (strain ATCC BAA-1232 / LMG 22953 / PM1) protein is Imidazole glycerol phosphate synthase subunit HisF.